A 1093-amino-acid chain; its full sequence is MANMEVSFTHLGNHLVSDSAAAIKAGGSDELSNIDPDENLLYGVYGGRGPRGNGRRRHDDDDNETEVLDDDDDESLASVPVDGMKSLKLDAPVEEKELPPHACAYCGIHSPSSVVKCLTCNKWFCSAKGSAFSSHIVNHLVRARHKEVQLHPESSLGDTVLECYNCGTKNVFILGFIPAKSDTVVVLLCRQPCGASTSTKDMSWDISRWQPLIEDRAFLNWLVTPPTDAEQLRARHLTPPMIAKLEEMWKEAPNATVADLEKTAGVDDDPHPVLLKYDDPYHYQNIFGPLVKMESDYDKKLKEAQSEDGLQVRWHLGLNSKHVASFILPKIESGDVKLAVGDEMRLKYKGELRPPWEGVGYVIKIPNNQSDEVEVELRKSANDKSVPTECTHNFSADYVWKATSYDRMQLAMKTFAVDEMSVSGYIFHKLLGHEVQVAPTKITMPKKFHVPGLPELNASQIAAIKQVLSNPLSLIQGPPGTGKTVTSATIIYHLAKMSNSQVLVCAPSNVAVDQLCERIHRTGLKVVRLTAKSREDVESSVSFLALHEQVRMNTTNKELDGLVKLKTETGELSSQDEKRFKQLTRQAEREILQNADVVCCTCVGAGDPRLSKMKFRNVLIDESTQSAEPECMIPLVLGCKQVVLVGDHKQLGPVIMNKKAAKAGLNQSLFERLVKLQFTPIRLKVQYRMHPCLSEFPSNMFYEGSLQNGVTAAERLRKDVDFPWPVPETPMMFWSNLGNEEISASGTSYLNRTEAANVEKIVTRFFKAGVKPADIGVITPYEGQRSYIVNTMQNTGTFKKESYREVEVASVDAFQGREKDFIVLSCVRSNENQGIGFLSDPRRLNVALTRAKYGLVIIGNPKVLCKHELWHHLLVHFKDKKCLVEGPLTNLQPSLLQFGRPRQAYRPQRSHTQHVASGPSNGRFAAPLTAGSVRDYETGSMVSYIPDDVSSIHSSALGGAALSSGYPAMFSNFHPEAWAGLPCAGPNGRPGAKGRGRATESIAGESVANSEFTDATSSVIGGKGIGQGGASLGAGLSEAIGSARPTSYSQSDRLKQYVESNGRMGVGNGYRRYDDDEKSVSTAFASQIGTGFD.

A disordered region spans residues 42-79 (YGVYGGRGPRGNGRRRHDDDDNETEVLDDDDDESLASV). Residues 61-75 (DDNETEVLDDDDDES) are compositionally biased toward acidic residues. The Upf1 CH-rich domain maps to 95-252 (EKELPPHACA…AKLEEMWKEA (158 aa)). Zn(2+)-binding residues include cysteine 103, cysteine 106, cysteine 117, cysteine 120, cysteine 125, histidine 135, histidine 139, histidine 145, cysteine 163, cysteine 166, cysteine 189, and cysteine 193. The segment at 103 to 135 (CAYCGIHSPSSVVKCLTCNKWFCSAKGSAFSSH) is C3H. The interval 117 to 145 (CLTCNKWFCSAKGSAFSSHIVNHLVRARH) is CC/SHH/C. The C4 stretch occupies residues 163–193 (CYNCGTKNVFILGFIPAKSDTVVVLLCRQPC). ATP contacts are provided by residues glutamine 460, 480–484 (GTGKT), glutamine 650, tyrosine 687, and glutamate 818.

It belongs to the DNA2/NAM7 helicase family.

It localises to the cytoplasm. It catalyses the reaction ATP + H2O = ADP + phosphate + H(+). Its function is as follows. RNA-dependent helicase required for nonsense-mediated decay (NMD) of aberrant mRNAs containing premature stop codons and modulates the expression level of normal mRNAs. Also capable of unwinding double-stranded DNA and translocating on single-stranded DNA. This Neurospora crassa (strain ATCC 24698 / 74-OR23-1A / CBS 708.71 / DSM 1257 / FGSC 987) protein is Regulator of nonsense transcripts 1 homolog.